The following is a 61-amino-acid chain: Lens epithelial cell protein LEP503 (61 aa).

In terms of tissue distribution, restricted to lens epithelial cells.

Functionally, may play a role in lens epithelial cell differentiation. This Homo sapiens (Human) protein is Lens epithelial cell protein LEP503 (LENEP).